The following is a 176-amino-acid chain: MASLIKEFKKLKVFLPKRMRELLIPSDEGFFDTNYRYPAPGSQTPPDITNKQFVKTRPLTRVYKFLKKRGEVLSLRKQPTLDAPTENLTAEEKAEKLFYETEPYPLTAPRIKDNKVFFHNIKAMEGFDIRNVRSINKNISKIENEFGVPIDRKVLRFEESEIDTDEPLPKSTNNLF.

This is an uncharacterized protein from Dictyostelium discoideum (Social amoeba).